The sequence spans 363 residues: 3-isopropylmalate dehydrogenase (363 aa).

78 to 91 (GPKWEHLPPDQQPE) provides a ligand contact to NAD(+). Residues Arg99, Arg109, Arg138, and Asp227 each coordinate substrate. Residues Asp227, Asp251, and Asp255 each contribute to the Mg(2+) site. 285–297 (GSAPDITGKNIAN) lines the NAD(+) pocket.

It belongs to the isocitrate and isopropylmalate dehydrogenases family. LeuB type 1 subfamily. As to quaternary structure, homodimer. It depends on Mg(2+) as a cofactor. The cofactor is Mn(2+).

It is found in the cytoplasm. It catalyses the reaction (2R,3S)-3-isopropylmalate + NAD(+) = 4-methyl-2-oxopentanoate + CO2 + NADH. It participates in amino-acid biosynthesis; L-leucine biosynthesis; L-leucine from 3-methyl-2-oxobutanoate: step 3/4. In terms of biological role, catalyzes the oxidation of 3-carboxy-2-hydroxy-4-methylpentanoate (3-isopropylmalate) to 3-carboxy-4-methyl-2-oxopentanoate. The product decarboxylates to 4-methyl-2 oxopentanoate. This chain is 3-isopropylmalate dehydrogenase, found in Shigella boydii serotype 4 (strain Sb227).